The primary structure comprises 883 residues: UTP--glucose-1-phosphate uridylyltransferase 3, chloroplastic (883 aa).

The transit peptide at 1–72 (MANPQASPIL…HQVRHVSTVP (72 aa)) directs the protein to the chloroplast.

This sequence belongs to the UDPGP type 1 family. It depends on Mg(2+) as a cofactor.

Its subcellular location is the plastid. The protein localises to the chloroplast. It catalyses the reaction alpha-D-glucose 1-phosphate + UTP + H(+) = UDP-alpha-D-glucose + diphosphate. Its activity is regulated as follows. Inhibited by pyrophosphate. Its function is as follows. Involved in the biosynthesis of sulfolipids in the chloroplast. Catalyzes the first committed step in sulfolipid biosynthesis. Converts glucose 1-phosphate to UDP-glucose, the precursor of the polar head of sulfolipid. In addition to glucose 1-phosphate, can use galactose 1-phosphate, but with much lower activity. No uridyltransferase activity with other hexose monophosphates. Specific for UTP and cannot use ATP, CTP, and GTP. The protein is UTP--glucose-1-phosphate uridylyltransferase 3, chloroplastic of Arabidopsis thaliana (Mouse-ear cress).